A 507-amino-acid polypeptide reads, in one-letter code: Probable cyclic di-GMP phosphodiesterase PdeG (507 aa).

A run of 2 helical transmembrane segments spans residues Thr4–Ile24 and Leu217–Phe237. In terms of domain architecture, EAL spans Ser246–Pro500.

The protein localises to the cell membrane. It carries out the reaction 3',3'-c-di-GMP + H2O = 5'-phosphoguanylyl(3'-&gt;5')guanosine + H(+). In terms of biological role, phosphodiesterase (PDE) that catalyzes the hydrolysis of cyclic-di-GMP (c-di-GMP) to 5'-pGpG. This is Probable cyclic di-GMP phosphodiesterase PdeG from Escherichia coli (strain K12).